We begin with the raw amino-acid sequence, 339 residues long: Ketol-acid reductoisomerase (NADP(+)) (339 aa).

The KARI N-terminal Rossmann domain maps to 1 to 182; it reads MRVYYDRDAD…GGGRSGIIET (182 aa). NADP(+) is bound by residues 24 to 27, Lys-48, Ser-51, Thr-53, and 83 to 86; these read YGSQ and DELQ. His-108 is a catalytic residue. Gly-134 contributes to the NADP(+) binding site. Residues 183-328 enclose the KARI C-terminal knotted domain; that stretch reads NFREECETDL…AKLRGMMPWI (146 aa). 4 residues coordinate Mg(2+): Asp-191, Glu-195, Glu-227, and Glu-231. Residue Ser-252 coordinates substrate.

This sequence belongs to the ketol-acid reductoisomerase family. It depends on Mg(2+) as a cofactor.

The catalysed reaction is (2R)-2,3-dihydroxy-3-methylbutanoate + NADP(+) = (2S)-2-acetolactate + NADPH + H(+). It carries out the reaction (2R,3R)-2,3-dihydroxy-3-methylpentanoate + NADP(+) = (S)-2-ethyl-2-hydroxy-3-oxobutanoate + NADPH + H(+). It participates in amino-acid biosynthesis; L-isoleucine biosynthesis; L-isoleucine from 2-oxobutanoate: step 2/4. It functions in the pathway amino-acid biosynthesis; L-valine biosynthesis; L-valine from pyruvate: step 2/4. In terms of biological role, involved in the biosynthesis of branched-chain amino acids (BCAA). Catalyzes an alkyl-migration followed by a ketol-acid reduction of (S)-2-acetolactate (S2AL) to yield (R)-2,3-dihydroxy-isovalerate. In the isomerase reaction, S2AL is rearranged via a Mg-dependent methyl migration to produce 3-hydroxy-3-methyl-2-ketobutyrate (HMKB). In the reductase reaction, this 2-ketoacid undergoes a metal-dependent reduction by NADPH to yield (R)-2,3-dihydroxy-isovalerate. This chain is Ketol-acid reductoisomerase (NADP(+)), found in Rhizobium johnstonii (strain DSM 114642 / LMG 32736 / 3841) (Rhizobium leguminosarum bv. viciae).